Reading from the N-terminus, the 425-residue chain is Tyrosine--tRNA ligase (425 aa).

Tyrosine 37 contacts L-tyrosine. The 'HIGH' region signature appears at 42–51 (PTADSLHLGH). L-tyrosine-binding residues include tyrosine 174 and glutamine 178. A 'KMSKS' region motif is present at residues 234–238 (KFGKS). Lysine 237 contributes to the ATP binding site. The S4 RNA-binding domain occupies 357–422 (DGLIDALAAS…RGKKLYALLV (66 aa)).

It belongs to the class-I aminoacyl-tRNA synthetase family. TyrS type 1 subfamily. In terms of assembly, homodimer.

The protein resides in the cytoplasm. The enzyme catalyses tRNA(Tyr) + L-tyrosine + ATP = L-tyrosyl-tRNA(Tyr) + AMP + diphosphate + H(+). In terms of biological role, catalyzes the attachment of tyrosine to tRNA(Tyr) in a two-step reaction: tyrosine is first activated by ATP to form Tyr-AMP and then transferred to the acceptor end of tRNA(Tyr). This chain is Tyrosine--tRNA ligase, found in Laribacter hongkongensis (strain HLHK9).